Reading from the N-terminus, the 328-residue chain is GMP reductase (328 aa).

The active-site Thioimidate intermediate is the cysteine 176. Isoleucine 205–valine 228 provides a ligand contact to NADP(+).

Belongs to the IMPDH/GMPR family. GuaC type 2 subfamily.

It carries out the reaction IMP + NH4(+) + NADP(+) = GMP + NADPH + 2 H(+). Catalyzes the irreversible NADPH-dependent deamination of GMP to IMP. It functions in the conversion of nucleobase, nucleoside and nucleotide derivatives of G to A nucleotides, and in maintaining the intracellular balance of A and G nucleotides. In Streptococcus pneumoniae (strain Hungary19A-6), this protein is GMP reductase.